Here is a 236-residue protein sequence, read N- to C-terminus: UPF0257 lipoprotein YnfC (236 aa).

An N-terminal signal peptide occupies residues 1 to 16; that stretch reads MKYKLLPCLLAIFLTG. Cysteine 17 carries N-palmitoyl cysteine lipidation. Residue cysteine 17 is the site of S-diacylglycerol cysteine attachment.

Belongs to the UPF0257 family.

Its subcellular location is the cell membrane. The sequence is that of UPF0257 lipoprotein YnfC from Escherichia coli O17:K52:H18 (strain UMN026 / ExPEC).